The primary structure comprises 268 residues: Aliphatic sulfonates import ATP-binding protein SsuB 2 (268 aa).

The ABC transporter domain maps to 16–230 (VQLRNVVRQF…DSGQAGFQSI (215 aa)). 48-55 (GASGSGKT) provides a ligand contact to ATP.

The protein belongs to the ABC transporter superfamily. Aliphatic sulfonates importer (TC 3.A.1.17.2) family. The complex is composed of two ATP-binding proteins (SsuB), two transmembrane proteins (SsuC) and a solute-binding protein (SsuA).

It localises to the cell inner membrane. The catalysed reaction is ATP + H2O + aliphatic sulfonate-[sulfonate-binding protein]Side 1 = ADP + phosphate + aliphatic sulfonateSide 2 + [sulfonate-binding protein]Side 1.. In terms of biological role, part of the ABC transporter complex SsuABC involved in aliphatic sulfonates import. Responsible for energy coupling to the transport system. This Pseudomonas savastanoi pv. phaseolicola (strain 1448A / Race 6) (Pseudomonas syringae pv. phaseolicola (strain 1448A / Race 6)) protein is Aliphatic sulfonates import ATP-binding protein SsuB 2.